Consider the following 462-residue polypeptide: Succinate semialdehyde dehydrogenase [NAD(P)+] Sad (462 aa).

NADP(+) contacts are provided by residues 136 to 137, 160 to 163, and 212 to 213; these read WN, KHAP, and GS. Glu-234 (proton acceptor) is an active-site residue. Leu-235 contacts NADP(+). Cys-268 (nucleophile) is an active-site residue. Glu-365 provides a ligand contact to NADP(+).

Belongs to the aldehyde dehydrogenase family. Homodimer.

It carries out the reaction succinate semialdehyde + NAD(+) + H2O = succinate + NADH + 2 H(+). The enzyme catalyses succinate semialdehyde + NADP(+) + H2O = succinate + NADPH + 2 H(+). It functions in the pathway amino-acid degradation; 4-aminobutanoate degradation. Its function is as follows. Catalyzes the NAD(+)-dependent oxidation of succinate semialdehyde to succinate. It acts preferentially with NAD as cosubstrate but can also use NADP. Prevents the toxic accumulation of succinate semialdehyde (SSA) and plays an important role when arginine and putrescine are used as the sole nitrogen or carbon sources. The protein is Succinate semialdehyde dehydrogenase [NAD(P)+] Sad (sad) of Escherichia coli (strain K12).